The sequence spans 735 residues: Catalase-peroxidase (735 aa).

2 stretches are compositionally biased toward polar residues: residues 1 to 10 and 17 to 26; these read MENQNRQNAA and SVTNQSSNRT. Residues 1-30 are disordered; sequence MENQNRQNAAQCPFHGSVTNQSSNRTTNKD. Residues 100–223 constitute a cross-link (tryptophyl-tyrosyl-methioninium (Trp-Tyr) (with M-249)); that stretch reads WHSAGTYRIG…LAAVQMGLIY (124 aa). H101 functions as the Proton acceptor in the catalytic mechanism. A cross-link (tryptophyl-tyrosyl-methioninium (Tyr-Met) (with W-100)) is located at residues 223-249; that stretch reads YVNPEGPDGKPDPKAAARDIRETFRRM. H264 is a binding site for heme b.

This sequence belongs to the peroxidase family. Peroxidase/catalase subfamily. As to quaternary structure, homodimer or homotetramer. Requires heme b as cofactor. In terms of processing, formation of the three residue Trp-Tyr-Met cross-link is important for the catalase, but not the peroxidase activity of the enzyme.

The enzyme catalyses H2O2 + AH2 = A + 2 H2O. The catalysed reaction is 2 H2O2 = O2 + 2 H2O. Bifunctional enzyme with both catalase and broad-spectrum peroxidase activity. Also displays NADH oxidase, INH lyase and isonicotinoyl-NAD synthase activities. The sequence is that of Catalase-peroxidase from Geobacillus stearothermophilus (Bacillus stearothermophilus).